A 314-amino-acid polypeptide reads, in one-letter code: TPR repeat-containing protein MJ1345 (314 aa).

TPR repeat units follow at residues 12-45 (ESILWDEYFDALEKRNYEKALLLIDKILEVRESP), 46-78 (DVYVRKARILRTLGENDKALEYFDKALKLKPKY), 80-112 (LANFLKGALLVSLGKLEEAKEVFLKLCRLEKSD), 114-146 (PVKYVTAFILKKLGEYDYALKIIDKILKKYPKS), 147-180 (AIAWAEKGEILYREGKLKKSLECFDNALKINPKD), 182-214 (QSLLYKGEILFKLGRYGEALKCLKKVFERNNKD), 215-248 (IRALMYIIQILIYLGRLNQALEYTKKALKLNPDD), 249-282 (PLLYLYKGIILNKLGKYNEAIKYFDKVLEINPNI), and 284-313 (DAWNGKAIALEKLGKINEAIECYNRALDIY).

This is TPR repeat-containing protein MJ1345 from Methanocaldococcus jannaschii (strain ATCC 43067 / DSM 2661 / JAL-1 / JCM 10045 / NBRC 100440) (Methanococcus jannaschii).